A 546-amino-acid polypeptide reads, in one-letter code: Sodium/hydrogen exchanger 2 (546 aa).

At 1 to 21 (MTMFASLTSKMLSVSTSDHAS) the chain is on the cytoplasmic side. A helical transmembrane segment spans residues 22–42 (VVSLNLFVALLCACIVIGHLL). Residues 43–47 (EENRW) lie on the Vacuolar side of the membrane. The helical transmembrane segment at 48–68 (MNESITALLIGLGTGVVILLI) threads the bilayer. Residues 69-75 (SRGKNSH) are Cytoplasmic-facing. The helical intramembrane region spans 76 to 96 (LLVFSEDLFFIYLLPPIIFNA). At 97–111 (GFQVKKKQFFRNFVT) the chain is on the cytoplasmic side. Residues 112–132 (IMAFGAIGTVVSCTIISLGAI) form a helical membrane-spanning segment. Residues 133–148 (QFFKKLDIGTFDLGDF) lie on the Vacuolar side of the membrane. Intramembrane regions (helical) lie at residues 149-168 (LAIG…QVLN) and 174-194 (LLYS…VVLF). Residues 195–218 (NAIQSFDLTHLNHEAAFQFLGNFF) lie on the Vacuolar side of the membrane. Residues 219–239 (YLFLLSTGLGVATGLISAYVI) traverse the membrane as a helical segment. Residues 240 to 264 (KKLYFGRHSTDREVALMMLMAYLSY) are Cytoplasmic-facing. Residues 265-285 (MLAELFALSGILTVFFCGIVM) traverse the membrane as a helical segment. At 286-304 (SHYTWHNVTESSRITTKHA) the chain is on the vacuolar side. N-linked (GlcNAc...) asparagine glycosylation is present at Asn-292. A helical membrane pass occupies residues 305-325 (FATLSFLAETFIFLYVGMDAL). The Cytoplasmic segment spans residues 326–344 (DIEKWRFVSDSPGTSVAVS). A helical transmembrane segment spans residues 345–365 (SILMGLVMLGRAAFVFPLSFL). Over 366–381 (SNLAKKHQSEKISIKQ) the chain is Vacuolar. Residues 382–402 (QVVIWWAGLMRGAVSMALAYN) traverse the membrane as a helical segment. Over 403 to 415 (KFTRSGHTELRGN) the chain is Cytoplasmic. The chain crosses the membrane as a helical span at residues 416 to 436 (AIMITSTITVCLFSTMVFGML). The Vacuolar segment spans residues 437–546 (TKPLIRYLMP…ERSSHDLSKP (110 aa)).

This sequence belongs to the monovalent cation:proton antiporter 1 (CPA1) transporter (TC 2.A.36) family. In terms of tissue distribution, expressed in roots and shoots.

The protein localises to the vacuole membrane. The enzyme catalyses Na(+)(in) + H(+)(out) = Na(+)(out) + H(+)(in). It catalyses the reaction K(+)(in) + H(+)(out) = K(+)(out) + H(+)(in). In terms of biological role, acts in low affinity electroneutral exchange of protons for cations such as Na(+) or K(+) across membranes. May also exchange Li(+) and Cs(+) with a lower affinity. Involved in vacuolar ion compartmentalization necessary for cell volume regulation and cytoplasmic Na(+) detoxification. The protein is Sodium/hydrogen exchanger 2 (NHX2) of Arabidopsis thaliana (Mouse-ear cress).